We begin with the raw amino-acid sequence, 365 residues long: Aminomethyltransferase (365 aa).

Belongs to the GcvT family. The glycine cleavage system is composed of four proteins: P, T, L and H.

It catalyses the reaction N(6)-[(R)-S(8)-aminomethyldihydrolipoyl]-L-lysyl-[protein] + (6S)-5,6,7,8-tetrahydrofolate = N(6)-[(R)-dihydrolipoyl]-L-lysyl-[protein] + (6R)-5,10-methylene-5,6,7,8-tetrahydrofolate + NH4(+). The glycine cleavage system catalyzes the degradation of glycine. This is Aminomethyltransferase from Chlorobaculum parvum (strain DSM 263 / NCIMB 8327) (Chlorobium vibrioforme subsp. thiosulfatophilum).